The chain runs to 124 residues: WAP four-disulfide core domain protein 2 (124 aa).

Residues 1–27 form the signal peptide; that stretch reads MPACRPGPLAGALLLGLLLLGLPRVPG. WAP domains are found at residues 29 to 73 and 74 to 123; these read EVEK…CHLP and NEKE…VTPI. 8 cysteine pairs are disulfide-bonded: cysteine 36–cysteine 62, cysteine 45–cysteine 66, cysteine 49–cysteine 61, cysteine 55–cysteine 70, cysteine 80–cysteine 110, cysteine 93–cysteine 114, cysteine 97–cysteine 109, and cysteine 103–cysteine 119. The N-linked (GlcNAc...) asparagine glycan is linked to asparagine 44.

Homotrimer; disulfide-linked. As to expression, epididymis. Highest levels are found in the caput and proximal cauda regions. Lower levels in the distal cauda. Not detected in the efferent ducts.

It localises to the secreted. Its function is as follows. Broad range protease inhibitor. Possible function in sperm maturation. In Canis lupus familiaris (Dog), this protein is WAP four-disulfide core domain protein 2 (WFDC2).